The sequence spans 144 residues: D-aminoacyl-tRNA deacylase (144 aa).

The Gly-cisPro motif, important for rejection of L-amino acids motif lies at 136–137; the sequence is GP.

Belongs to the DTD family. In terms of assembly, homodimer.

The protein localises to the cytoplasm. The catalysed reaction is glycyl-tRNA(Ala) + H2O = tRNA(Ala) + glycine + H(+). It catalyses the reaction a D-aminoacyl-tRNA + H2O = a tRNA + a D-alpha-amino acid + H(+). Functionally, an aminoacyl-tRNA editing enzyme that deacylates mischarged D-aminoacyl-tRNAs. Also deacylates mischarged glycyl-tRNA(Ala), protecting cells against glycine mischarging by AlaRS. Acts via tRNA-based rather than protein-based catalysis; rejects L-amino acids rather than detecting D-amino acids in the active site. By recycling D-aminoacyl-tRNA to D-amino acids and free tRNA molecules, this enzyme counteracts the toxicity associated with the formation of D-aminoacyl-tRNA entities in vivo and helps enforce protein L-homochirality. The chain is D-aminoacyl-tRNA deacylase from Aliivibrio fischeri (strain MJ11) (Vibrio fischeri).